Consider the following 1350-residue polypeptide: 1-phosphatidylinositol 4,5-bisphosphate phosphodiesterase gamma plc-3 (1350 aa).

Residues 1 to 40 (MQHGSLGPSSSSRKTTVTSTAGSVHLHHRSSNGFSTASRA) form a disordered region. Over residues 9-20 (SSSSRKTTVTST) the composition is skewed to low complexity. The segment covering 31–40 (SNGFSTASRA) has biased composition (polar residues). The PI-PLC X-box domain maps to 352 to 503 (HDMSRPLSHY…LKKKIIVKHK (152 aa)). Active-site residues include H367 and H419. The tract at residues 570-594 (NPNDDTVSVSGDEEREEETPSGFGV) is disordered. SH2 domains follow at residues 605–704 (WFHG…TIPC) and 715–804 (WFSA…RFPV). Positions 832–890 (DKEVQARALRPYRGTADDELSFPANVIITVLRKEEGLWRGRYGSLTGWFPSAHVQEILP) constitute an SH3 domain. One can recognise a PH domain in the interval 855–960 (ANVIITVLRK…WQNNLFELTR (106 aa)). Residues 982–1092 (LSNLVVYCQA…CGYLLKPDYM (111 aa)) form the PI-PLC Y-box domain. In terms of domain architecture, C2 spans 1099–1220 (PTNTEKFATA…CGFRSVPLKN (122 aa)). A disordered region spans residues 1270-1350 (GDSIPREMAP…KFSFGKSSKS (81 aa)). Over residues 1283 to 1329 (TSATDRSLDSPTNSESRATLLSGQRGSQDSMDSAAETSSIASGTISS) the composition is skewed to polar residues. A compositionally biased stretch (low complexity) spans 1340 to 1350 (KKFSFGKSSKS).

Ca(2+) is required as a cofactor. Expressed in intestine, isthmus of the pharynx, proximal gonad sheath cells, spermatheca and uterine sheath cells. In males, expressed in the valve cell, the vas deferens and retractor and ventral protactor muscles.

The enzyme catalyses a 1,2-diacyl-sn-glycero-3-phospho-(1D-myo-inositol-4,5-bisphosphate) + H2O = 1D-myo-inositol 1,4,5-trisphosphate + a 1,2-diacyl-sn-glycerol + H(+). Mediates the production of the second messenger molecules diacylglycerol (DAG) and inositol 1,4,5-trisphosphate (IP3) which plays an important role in the regulation of intracellular signaling cascades. Regulates basal and ovulatory sheath cell contractions by controlling Ca(2+) oscillations via IP3-mediated activation of IP3 receptor itr-1. In intestinal epithelial cells, regulates Ca(2+) oscillations which control posterior body wall muscle contractions required for defecation by IP3-mediated activation of itr-1 and probably by activating TRPM channels gon-2 and gtl-1 by reducing PIP2 levels. By activating tpa-1 via DAG production, required for the expression of antimicrobial peptide nlp-29 in the epidermis in response to fungal infection or physical injury. By triggering Ca(2+) transient via IP3-mediated activation of IPR3 receptor itr-1 in ASH sensory neurons, involved in avoidance behavior in response to nose touch. Probably by regulating neuronal transmission in ALA neurons, mediates the decrease in pharyngeal pumping and locomotion during the quiescent state that precedes each larval molt, downstream of lin-3 and receptor let-23 and upstream of tpa-1 but not itr-1. During embryogenesis, may play an role in epidermal morphogenesis together with plc-1. Probably downstream of receptor daf-2, regulates male-sex muscle excitability in the absence of food. The sequence is that of 1-phosphatidylinositol 4,5-bisphosphate phosphodiesterase gamma plc-3 from Caenorhabditis elegans.